We begin with the raw amino-acid sequence, 1020 residues long: Mediator of RNA polymerase II transcription subunit 16 (1020 aa).

The protein belongs to the Mediator complex subunit 16 family. As to quaternary structure, component of the Mediator complex.

It is found in the nucleus. Component of the Mediator complex, a coactivator involved in the regulated transcription of nearly all RNA polymerase II-dependent genes. Mediator functions as a bridge to convey information from gene-specific regulatory proteins to the basal RNA polymerase II transcription machinery. Mediator is recruited to promoters by direct interactions with regulatory proteins and serves as a scaffold for the assembly of a functional preinitiation complex with RNA polymerase II and the general transcription factors. In Scheffersomyces stipitis (strain ATCC 58785 / CBS 6054 / NBRC 10063 / NRRL Y-11545) (Yeast), this protein is Mediator of RNA polymerase II transcription subunit 16 (SIN4).